The chain runs to 258 residues: UPF0246 protein CGSHiEE_07045 (258 aa).

The protein belongs to the UPF0246 family.

The sequence is that of UPF0246 protein CGSHiEE_07045 from Haemophilus influenzae (strain PittEE).